The following is a 141-amino-acid chain: ATP synthase epsilon chain (141 aa).

It belongs to the ATPase epsilon chain family. In terms of assembly, F-type ATPases have 2 components, CF(1) - the catalytic core - and CF(0) - the membrane proton channel. CF(1) has five subunits: alpha(3), beta(3), gamma(1), delta(1), epsilon(1). CF(0) has three main subunits: a, b and c.

It localises to the cell inner membrane. In terms of biological role, produces ATP from ADP in the presence of a proton gradient across the membrane. The chain is ATP synthase epsilon chain from Dechloromonas aromatica (strain RCB).